The following is a 175-amino-acid chain: Granulocyte colony-stimulating factor (175 aa).

Disulfide bonds link Cys37–Cys43 and Cys65–Cys75. O-linked (GalNAc...) threonine glycosylation occurs at Thr134.

The protein belongs to the IL-6 superfamily. As to quaternary structure, monomer. In terms of processing, O-glycosylated.

The protein resides in the secreted. Its function is as follows. Granulocyte/macrophage colony-stimulating factors are cytokines that act in hematopoiesis by controlling the production, differentiation, and function of 2 related white cell populations of the blood, the granulocytes and the monocytes-macrophages. This CSF induces granulocytes. This Canis lupus familiaris (Dog) protein is Granulocyte colony-stimulating factor (CSF3).